Here is a 286-residue protein sequence, read N- to C-terminus: MEADNGGPNSSHASKQRLRWTHELHERFVDAVAQLGGPDRATPKGVLRVMGVQGLTIYHVKSHLQKYRLAKYLPDSSSEGKKTDKKESGDMLSGLDGSSGMQITEALKLQMEVQKRLHEQLEVQRQLQLRIEAQGKYLKKIIEEQQRLSGVLGEPSAPVTGDSDPATPAPTSESPLQDKSGKDCGPDKSLSVDESLSSYREPLTPDSGCNIGSPDESTGEERLSKKPRLVRGAAGYTPDIVVGHPILESGLNTSYHQSDHVLAFDQPSTSLLGAEEQLDKVSGDNL.

One can recognise an HTH myb-type domain in the interval 12–72 (HASKQRLRWT…HLQKYRLAKY (61 aa)). Residues 43-68 (PKGVLRVMGVQGLTIYHVKSHLQKYR) constitute a DNA-binding region (H-T-H motif). The disordered stretch occupies residues 74-97 (PDSSSEGKKTDKKESGDMLSGLDG). Residues 78–89 (SEGKKTDKKESG) are compositionally biased toward basic and acidic residues. Positions 104–124 (TEALKLQMEVQKRLHEQLEVQ) form a coiled coil. An LHEQLE motif is present at residues 117–122 (LHEQLE). The tract at residues 152 to 227 (LGEPSAPVTG…TGEERLSKKP (76 aa)) is disordered.

Belongs to the MYB-CC family.

The protein localises to the nucleus. The polypeptide is Myb family transcription factor PHL7 (Arabidopsis thaliana (Mouse-ear cress)).